The sequence spans 1416 residues: Uveal autoantigen with coiled-coil domains and ankyrin repeats (1416 aa).

Met1 is modified (N-acetylmethionine). Residues 1-24 are disordered; the sequence is MKSLKSRLRRQDVPGPASSGAAAA. 6 ANK repeats span residues 38 to 66, 67 to 96, 100 to 129, 133 to 162, 166 to 195, and 199 to 228; these read LMKAAERGDVEKVTSILAKKGVNPGKLDV, EGRSVFHVVTSKGNLECLNAILIHGVDITT, AGRNALHLAAKYGHALCLQKLLQYNCPTEH, QGRTALHDAAMADCPSSIQLLCDHGASVNA, DGRTPLVLATQMSRPTICQLLIDRGADVNS, and QNRTALMLGCEYGCRDAVEVLIKNGADISL. 2 coiled-coil regions span residues 286–374 and 438–1386; these read VKSH…NRFK and ENEI…IYRT. Lys1035 is covalently cross-linked (Glycyl lysine isopeptide (Lys-Gly) (interchain with G-Cter in SUMO2)).

Component of the apoptosome complex, composed of APAF1, pro-caspase-9 and UACA. In the complex, it probably interacts directly with APAF1. Interacts with LGALS3, ARF6 and ACTB. Interacts with RAB39A. As to expression, highly expressed in skeletal muscle, heart, kidney and pancreas. Expressed in choroid, retina and epidermal melanocytes. Expressed in eye muscles and thyroid follicular cells.

It is found in the nucleus. It localises to the cytoplasm. The protein resides in the cytoskeleton. Its function is as follows. Regulates APAF1 expression and plays an important role in the regulation of stress-induced apoptosis. Promotes apoptosis by regulating three pathways, apoptosome up-regulation, LGALS3/galectin-3 down-regulation and NF-kappa-B inactivation. Regulates the redistribution of APAF1 into the nucleus after proapoptotic stress. Down-regulates the expression of LGALS3 by inhibiting NFKB1. Modulates isoactin dynamics to regulate the morphological alterations required for cell growth and motility. Interaction with ARF6 may modulate cell shape and motility after injury. May be involved in multiple neurite formation. In Homo sapiens (Human), this protein is Uveal autoantigen with coiled-coil domains and ankyrin repeats (UACA).